Here is a 428-residue protein sequence, read N- to C-terminus: Chaperone SurA (428 aa).

An N-terminal signal peptide occupies residues 1-13 (MLGALLLSGAVHA). 2 consecutive PpiC domains span residues 164–265 (SEEF…KLLE) and 276–375 (RDEV…EVLG). The segment at 211-230 (TSSSSENALEGGDMGWRKAA) is disordered.

The protein localises to the periplasm. The enzyme catalyses [protein]-peptidylproline (omega=180) = [protein]-peptidylproline (omega=0). Its function is as follows. Chaperone involved in the correct folding and assembly of outer membrane proteins. Recognizes specific patterns of aromatic residues and the orientation of their side chains, which are found more frequently in integral outer membrane proteins. May act in both early periplasmic and late outer membrane-associated steps of protein maturation. This is Chaperone SurA from Pseudomonas syringae pv. syringae (strain B728a).